A 192-amino-acid polypeptide reads, in one-letter code: dTTP/UTP pyrophosphatase (192 aa).

Asp-71 (proton acceptor) is an active-site residue.

Belongs to the Maf family. YhdE subfamily. Requires a divalent metal cation as cofactor.

The protein resides in the cytoplasm. The enzyme catalyses dTTP + H2O = dTMP + diphosphate + H(+). It carries out the reaction UTP + H2O = UMP + diphosphate + H(+). Functionally, nucleoside triphosphate pyrophosphatase that hydrolyzes dTTP and UTP. May have a dual role in cell division arrest and in preventing the incorporation of modified nucleotides into cellular nucleic acids. The chain is dTTP/UTP pyrophosphatase from Pseudoalteromonas atlantica (strain T6c / ATCC BAA-1087).